Reading from the N-terminus, the 292-residue chain is 11-beta-hydroxysteroid dehydrogenase 1 (292 aa).

Topologically, residues 1–7 (MAFMKKY) are cytoplasmic. Residues 8-24 (LLPILGIFLAYYYYSAN) traverse the membrane as a helical; Signal-anchor for type II membrane protein segment. The Lumenal portion of the chain corresponds to 25–292 (EEFRPEMLRG…KYNMERFINN (268 aa)). NADP(+) is bound by residues 41–67 (GASKGIGREMAYHLARMGAHVVVTARS) and 92–93 (TM). N-linked (GlcNAc...) asparagine glycosylation occurs at Asn-95. 119 to 121 (NHI) provides a ligand contact to NADP(+). Ser-170 serves as a coordination point for substrate. The Proton acceptor role is filled by Tyr-183. 183 to 187 (YSASK) lines the NADP(+) pocket. An N-linked (GlcNAc...) asparagine glycan is attached at Asn-207. NADP(+) is bound by residues 216–222 (GLIDTDT) and 218–222 (IDTDT).

This sequence belongs to the short-chain dehydrogenases/reductases (SDR) family. In terms of assembly, homodimer. Liver, kidney, lung, hypothalamus, anterior pituitary and placenta.

The protein resides in the endoplasmic reticulum membrane. It catalyses the reaction an 11beta-hydroxysteroid + NADP(+) = an 11-oxosteroid + NADPH + H(+). The catalysed reaction is corticosterone + NADP(+) = 11-dehydrocorticosterone + NADPH + H(+). It carries out the reaction cortisone + NADPH + H(+) = cortisol + NADP(+). The enzyme catalyses a 7beta-hydroxysteroid + NADP(+) = a 7-oxosteroid + NADPH + H(+). It catalyses the reaction 7-oxocholesterol + NADPH + H(+) = 7beta-hydroxycholesterol + NADP(+). The catalysed reaction is chenodeoxycholate + NADP(+) = 7-oxolithocholate + NADPH + H(+). It carries out the reaction 7-oxolithocholate + NADPH + H(+) = ursodeoxycholate + NADP(+). The enzyme catalyses glycochenodeoxycholate + NADP(+) = 7-oxoglycolithocholate + NADPH + H(+). It catalyses the reaction taurochenodeoxycholate + NADP(+) = 7-oxotaurolithocholate + NADPH + H(+). The catalysed reaction is tauroursodeoxycholate + NADP(+) = 7-oxotaurolithocholate + NADPH + H(+). It carries out the reaction glycoursodeoxycholate + NADP(+) = 7-oxoglycolithocholate + NADPH + H(+). The enzyme catalyses 7-oxopregnenolone + NADPH + H(+) = 7beta-hydroxypregnenolone + NADP(+). It catalyses the reaction 3beta,7alpha-dihydroxyandrost-5-en-17-one + NADP(+) = 3beta-hydroxy-5-androstene-7,17-dione + NADPH + H(+). The catalysed reaction is 3beta-hydroxy-5-androstene-7,17-dione + NADPH + H(+) = 3beta,7beta-dihydroxyandrost-5-en-17-one + NADP(+). It carries out the reaction 3beta-hydroxy-5alpha-androstane-7,17-dione + NADPH + H(+) = 3beta,7beta-dihydroxy-5alpha-androstan-17-one + NADP(+). Functionally, controls the reversible conversion of biologically active glucocorticoids such as cortisone to cortisol, and 11-dehydrocorticosterone to corticosterone in the presence of NADP(H). Participates in the corticosteroid receptor-mediated anti-inflammatory response, as well as metabolic and homeostatic processes. Plays a role in the secretion of aqueous humor in the eye, maintaining a normotensive, intraocular environment. Bidirectional in vitro, predominantly functions as a reductase in vivo, thereby increasing the concentration of active glucocorticoids. It has broad substrate specificity, besides glucocorticoids, it accepts other steroid and sterol substrates. Interconverts 7-oxo- and 7-hydroxy-neurosteroids such as 7-oxopregnenolone and 7beta-hydroxypregnenolone, 7-oxodehydroepiandrosterone (3beta-hydroxy-5-androstene-7,17-dione) and 7beta-hydroxydehydroepiandrosterone (3beta,7beta-dihydroxyandrost-5-en-17-one), among others. Catalyzes the stereo-specific conversion of the major dietary oxysterol, 7-ketocholesterol (7-oxocholesterol), into the more polar 7-beta-hydroxycholesterol metabolite. 7-oxocholesterol is one of the most important oxysterols, it participates in several events such as induction of apoptosis, accumulation in atherosclerotic lesions, lipid peroxidation, and induction of foam cell formation. Mediates the 7-oxo reduction of 7-oxolithocholate mainly to chenodeoxycholate, and to a lesser extent to ursodeoxycholate, both in its free form and when conjugated to glycine or taurine, providing a link between glucocorticoid activation and bile acid metabolism. Catalyzes the synthesis of 7-beta-25-dihydroxycholesterol from 7-oxo-25-hydroxycholesterol in vitro, which acts as a ligand for the G-protein-coupled receptor (GPCR) Epstein-Barr virus-induced gene 2 (EBI2) and may thereby regulate immune cell migration. In Ovis aries (Sheep), this protein is 11-beta-hydroxysteroid dehydrogenase 1 (HSD11B1).